Here is a 569-residue protein sequence, read N- to C-terminus: Peroxynitrite isomerase THAP4 (569 aa).

A THAP-type zinc finger spans residues 1-85 (MVICCAAVNC…LKPTAVPSIF (85 aa)). Residues 88 to 216 (SEKKRGAGGH…DKSGISMDDF (129 aa)) are disordered. 2 stretches are compositionally biased toward polar residues: residues 121 to 130 (IGSSLSSSDN) and 157 to 167 (AVSQEQGQSLE). Serine 159 is modified (phosphoserine). The HCFC1-binding motif (HBM) signature appears at 230 to 233 (LHSY). At serine 234 the chain carries Phosphoserine. The tract at residues 235–312 (FSSKHTRERP…EAVQSEHSDA (78 aa)) is disordered. Positions 242–262 (ERPSVPREPMDRKRLKREMEP) are enriched in basic and acidic residues. A compositionally biased stretch (polar residues) spans 265–279 (SGNSVAQSPPSSSLT). Residues 280–289 (ATPQKASQSP) are compositionally biased toward low complexity. The segment at 407-569 (PPKLNPVVEP…LHITYKKVTP (163 aa)) is nitrobindin. The heme b site is built by threonine 436 and histidine 559.

The protein in the C-terminal section; belongs to the nitrobindin family. As to quaternary structure, homodimer. It depends on heme b as a cofactor.

It is found in the cytoplasm. It localises to the nucleus. The enzyme catalyses peroxynitrite = nitrate. The protein operates within nitrogen metabolism. Functionally, heme-binding protein able to scavenge peroxynitrite and to protect free L-tyrosine against peroxynitrite-mediated nitration, by acting as a peroxynitrite isomerase that converts peroxynitrite to nitrate. Therefore, this protein likely plays a role in peroxynitrite sensing and in the detoxification of reactive nitrogen and oxygen species (RNS and ROS, respectively). Is able to bind nitric oxide (NO) in vitro, but may act as a sensor of peroxynitrite levels in vivo, possibly modulating the transcriptional activity residing in the N-terminal region. The polypeptide is Peroxynitrite isomerase THAP4 (Mus musculus (Mouse)).